The chain runs to 152 residues: MSSKMIVLMSSDGQSFEVEEAVAIQSQTIAHMVEDDCVADGIPLANVESKILVKVIEYCKKYHVDEANPISEEDLNKWDEKFMDLEQSTIFELILAANYLNIKSLFDLTCQTVADMIKGKTPEEIRSTFNIENDFTPEEEEAVRKENQWAFE.

Positions 94 to 152 (ILAANYLNIKSLFDLTCQTVADMIKGKTPEEIRSTFNIENDFTPEEEEAVRKENQWAFE) are interaction with the F-box domain of F-box proteins.

This sequence belongs to the SKP1 family. Part of a SCF (SKP1-cullin-F-box) protein ligase complex. Interacts with ADO3/FKF1, COI1/FBL2, EBF1/FBL6, PP2B10, At3g61590 and At5g49610. In terms of tissue distribution, expressed in young seedlings, roots, leaves, floral stems, inflorescences, and siliques, with a slightly higher level in inflorescence than in other tissues.

It localises to the nucleus. The protein operates within protein modification; protein ubiquitination. Involved in ubiquitination and subsequent proteasomal degradation of target proteins. Together with CUL1, RBX1 and a F-box protein, it forms a SCF E3 ubiquitin ligase complex. The functional specificity of this complex depends on the type of F-box protein. In the SCF complex, it serves as an adapter that links the F-box protein to CUL1. Plays a role during early flowers reproductive development. The chain is SKP1-like protein 12 (ASK12) from Arabidopsis thaliana (Mouse-ear cress).